Consider the following 77-residue polypeptide: Exodeoxyribonuclease 7 small subunit (77 aa).

It belongs to the XseB family. In terms of assembly, heterooligomer composed of large and small subunits.

It is found in the cytoplasm. The enzyme catalyses Exonucleolytic cleavage in either 5'- to 3'- or 3'- to 5'-direction to yield nucleoside 5'-phosphates.. In terms of biological role, bidirectionally degrades single-stranded DNA into large acid-insoluble oligonucleotides, which are then degraded further into small acid-soluble oligonucleotides. In Alkaliphilus oremlandii (strain OhILAs) (Clostridium oremlandii (strain OhILAs)), this protein is Exodeoxyribonuclease 7 small subunit.